The sequence spans 488 residues: MINRQLSRLLLCSILGSTTLISGCALVRKDSAPHQQLKPEQIKLADDIHLASSGWPQAQWWKQLNDPQLDALIQRTLSGSHTLAEAKLREEKAQSQADLLDAGSQLQVAALGMLNRQRVSANGFLSPYAMDAPALGMDGPYYTEATVGLFAGLDLDLWGVHRSAVAAAIGAHNAALAETAAVELSLTTGVAQLYYSMQASYQMLDLLEQTRDVIDYAVKAHQSKVAHGLEAQVPFHGARAQILAVDKQIAAVKGQITETRESLRALIGAGASDMPEIKPVALPRVQTGIPATLSYELLARRPDLQAMRWYVQASLDQVDSARALFYPSFDIKAFFGLDAIHLDTLFKKTSRQFNFIPGLKLPLFDGGRLNANLEGTRAASNMMIERYNQSVLNAVRDVAVNGTRLQTLNDEREMQAEHVEATRFTQRAAEAAYQRGLTSRLQATEARLPVLAEEMSLLMLDSRRVIQSIQLMKSLGGGYQAAPVVEKK.

The first 23 residues, 1–23 (MINRQLSRLLLCSILGSTTLISG), serve as a signal peptide directing secretion. A lipid anchor (N-palmitoyl cysteine) is attached at Cys24. Cys24 carries the S-diacylglycerol cysteine lipid modification.

The protein belongs to the outer membrane factor (OMF) (TC 1.B.17) family. Could be part of a tripartite efflux system composed of MdtN, MdtO and MdtP.

The protein localises to the cell outer membrane. In terms of biological role, could be involved in resistance to puromycin, acriflavine and tetraphenylarsonium chloride. In Shigella flexneri, this protein is Multidrug resistance outer membrane protein MdtP (mdtP).